The sequence spans 1297 residues: Phosphoribosylformylglycinamidine synthase (1297 aa).

ATP-binding positions include 307–318 and alanine 678; that span reads GASTGSGGEIRD. Mg(2+) is bound by residues glutamate 718, asparagine 722, and aspartate 886. Positions 1044 to 1297 constitute a Glutamine amidotransferase type-1 domain; that stretch reads MAILREQGVN…MFQNARKNLA (254 aa). Cysteine 1137 serves as the catalytic Nucleophile. Catalysis depends on residues histidine 1262 and glutamate 1264.

The protein in the N-terminal section; belongs to the FGAMS family. As to quaternary structure, monomer.

It localises to the cytoplasm. The catalysed reaction is N(2)-formyl-N(1)-(5-phospho-beta-D-ribosyl)glycinamide + L-glutamine + ATP + H2O = 2-formamido-N(1)-(5-O-phospho-beta-D-ribosyl)acetamidine + L-glutamate + ADP + phosphate + H(+). It functions in the pathway purine metabolism; IMP biosynthesis via de novo pathway; 5-amino-1-(5-phospho-D-ribosyl)imidazole from N(2)-formyl-N(1)-(5-phospho-D-ribosyl)glycinamide: step 1/2. Functionally, phosphoribosylformylglycinamidine synthase involved in the purines biosynthetic pathway. Catalyzes the ATP-dependent conversion of formylglycinamide ribonucleotide (FGAR) and glutamine to yield formylglycinamidine ribonucleotide (FGAM) and glutamate. This Vibrio vulnificus (strain YJ016) protein is Phosphoribosylformylglycinamidine synthase.